Reading from the N-terminus, the 127-residue chain is MEDQPPTEIQISVETRYLPEQSSPEQEHFAFAYQITMQNNGPQTAQLLSRHWIITDAEGHVQEVKGPGVVGEQPTLQPGQRFRYTSGSVLSTPVGSMHGTFEWVSDTGESFVVPIPAFRLAAATVFH.

The ApaG domain maps to 3 to 127; it reads DQPPTEIQIS…FRLAAATVFH (125 aa).

The chain is Protein ApaG from Acidithiobacillus ferrooxidans (strain ATCC 23270 / DSM 14882 / CIP 104768 / NCIMB 8455) (Ferrobacillus ferrooxidans (strain ATCC 23270)).